The following is a 331-amino-acid chain: Ornithine carbamoyltransferase, catabolic (331 aa).

Carbamoyl phosphate is bound by residues serine 57 to threonine 60, glutamine 82, arginine 106, and histidine 133 to glutamine 136. Residues asparagine 166, aspartate 230, and serine 234–methionine 235 each bind L-ornithine. Carbamoyl phosphate-binding positions include cysteine 272–leucine 273 and arginine 317.

This sequence belongs to the aspartate/ornithine carbamoyltransferase superfamily. OTCase family.

Its subcellular location is the cytoplasm. The enzyme catalyses carbamoyl phosphate + L-ornithine = L-citrulline + phosphate + H(+). It functions in the pathway amino-acid degradation; L-arginine degradation via ADI pathway; carbamoyl phosphate from L-arginine: step 2/2. Its function is as follows. Reversibly catalyzes the transfer of the carbamoyl group from carbamoyl phosphate (CP) to the N(epsilon) atom of ornithine (ORN) to produce L-citrulline. This Clostridium perfringens (strain ATCC 13124 / DSM 756 / JCM 1290 / NCIMB 6125 / NCTC 8237 / Type A) protein is Ornithine carbamoyltransferase, catabolic (arcB).